A 48-amino-acid polypeptide reads, in one-letter code: Osteocalcin (48 aa).

In terms of domain architecture, Gla spans 1–46 (SFAVGSSYGAAPDPLEAQREVCELNPDCDELADHIGFQEAYRRFYG). The Ca(2+) site is built by Glu16, Glu20, Glu23, and Asp29. A 4-carboxyglutamate mark is found at Glu16, Glu20, and Glu23. A disulfide bridge connects residues Cys22 and Cys28.

It belongs to the osteocalcin/matrix Gla protein family. Post-translationally, gamma-carboxyglutamate residues are formed by vitamin K dependent carboxylation by GGCX. These residues are essential for the binding of calcium.

It localises to the secreted. In terms of biological role, the carboxylated form is one of the main organic components of the bone matrix, which constitutes 1-2% of the total bone protein. The carboxylated form binds strongly to apatite and calcium. In Dromaius novaehollandiae (Emu), this protein is Osteocalcin (BGLAP).